Here is a 304-residue protein sequence, read N- to C-terminus: Nucleotide-binding protein KRH_12070 (304 aa).

27 to 34 lines the ATP pocket; the sequence is GMSGAGRS. Residue 78-81 coordinates GTP; the sequence is DVRG.

Belongs to the RapZ-like family.

Its function is as follows. Displays ATPase and GTPase activities. This is Nucleotide-binding protein KRH_12070 from Kocuria rhizophila (strain ATCC 9341 / DSM 348 / NBRC 103217 / DC2201).